A 238-amino-acid chain; its full sequence is U2 small nuclear ribonucleoprotein A' (238 aa).

LRR repeat units follow at residues 53–74, 75–95, and 97–118; these read PTHI…SRRD, DIHT…RLLP, and NVQN…QRLR. The LRRCT domain maps to 132-170; sequence NQVCHLANYREHVLRLVPHLETLDFQNVTAEERKSAMSF. Residues 167–189 are disordered; sequence AMSFPRQADGDTLGPVNTAIRDN.

The protein belongs to the U2 small nuclear ribonucleoprotein A family. Belongs to the CWC complex (or CEF1-associated complex), a spliceosome sub-complex reminiscent of a late-stage spliceosome composed of the U2, U5 and U6 snRNAs and at least BUD13, BUD31, BRR2, CDC40, CEF1, CLF1, CUS1, CWC2, CWC15, CWC21, CWC22, CWC23, CWC24, CWC25, CWC27, ECM2, HSH155, IST3, ISY1, LEA1, MSL1, NTC20, PRP8, PRP9, PRP11, PRP19, PRP21, PRP22, PRP45, PRP46, SLU7, SMB1, SMD1, SMD2, SMD3, SMX2, SMX3, SNT309, SNU114, SPP2, SYF1, SYF2, RSE1 and YJU2. Interacts with MSL1.

It localises to the nucleus. Involved in pre-mRNA splicing. Associates to U2 snRNA in a MSL1 dependent manner and is required for normal accumulation of U2 snRNA. Required for the spliceosome assembly and the efficient addition of U2 snRNP onto the pre-mRNA. This Saccharomyces cerevisiae (strain ATCC 204508 / S288c) (Baker's yeast) protein is U2 small nuclear ribonucleoprotein A' (LEA1).